An 81-amino-acid chain; its full sequence is Carboxysome shell vertex protein CsoS4B (81 aa).

Residues 1–77 enclose the BMV domain; the sequence is MEVMRVRSDL…TDLTIGGIID (77 aa).

Belongs to the CcmL/EutN family. CsoS4 subfamily. Homopentamer.

The protein localises to the carboxysome. In terms of biological role, probably forms vertices in the carboxysome. Has been modeled to induce curvature upon insertion into an otherwise flat hexagonal layer of major carboxysome subunits. A minor shell protein, only 12 pentamers of CsoS4A/CsoS4B are calculated to be present in each carboxysome. The 2 CsoS4 proteins contribute to the impermeability of the carboxysome to CO(2). Its central pore is probably too small to allow passage of metabolites; its function might be to anchor different proteins or metabolites to the carboxysome. Unlike beta-carboxysomes, alpha-carboxysomes (Cb) can form without cargo protein. CsoS2 is essential for Cb formation and is also capable of targeting foreign proteins to the Cb. The Cb shell assembles with the aid of CsoS2; CsoS1A, CsoS1B and CsoS1C form the majority of the shell while CsoS4A and CsoS4B form vertices. CsoS1D forms pseudohexamers that probably control metabolite flux into and out of the shell. The polypeptide is Carboxysome shell vertex protein CsoS4B (Halothiobacillus neapolitanus (strain ATCC 23641 / c2) (Thiobacillus neapolitanus)).